Reading from the N-terminus, the 75-residue chain is Cytochrome c oxidase assembly factor 5 (75 aa).

Positions 28–66 constitute a CHCH domain; it reads QHDCVVKEGKKPSECLKEGHCRSMQVAFFECKRSMLDTR. Residues 31–42 carry the Cx10C motif motif; the sequence is CVVKEGKKPSEC. Disulfide bonds link cysteine 31–cysteine 58 and cysteine 42–cysteine 48. A Cx9C motif motif is present at residues 48–58; it reads CRSMQVAFFEC.

Belongs to the PET191 family.

Its function is as follows. Involved in an early step of the mitochondrial complex IV assembly process. This chain is Cytochrome c oxidase assembly factor 5 (coa5), found in Danio rerio (Zebrafish).